Here is a 30-residue protein sequence, read N- to C-terminus: TQACRINSGNVPSELDLRSLRTVTPIRMQG.

Belongs to the peptidase C1 family.

Its subcellular location is the secreted. The catalysed reaction is Broad endopeptidase specificity.. In terms of biological role, thiol protease that hydrolyzes proteins, with a preference for Phe or basic residues. In Dermatophagoides microceras (House dust mite), this protein is Peptidase 1 (DERM1).